The following is a 131-amino-acid chain: MSKKTDDILDSLKTLSLLEASELVKQIEDAFGVSAAASAGVVVAAGGAAGGGAAAEAAEEQTEFDVVLESFDASAKIKVLKAVREATGLGLGDAKAMVEAAPKTIKEGIAKNDAEALKKAIEEVGGKVSLK.

It belongs to the bacterial ribosomal protein bL12 family. In terms of assembly, homodimer. Part of the ribosomal stalk of the 50S ribosomal subunit. Forms a multimeric L10(L12)X complex, where L10 forms an elongated spine to which 2 to 4 L12 dimers bind in a sequential fashion. Binds GTP-bound translation factors.

Functionally, forms part of the ribosomal stalk which helps the ribosome interact with GTP-bound translation factors. Is thus essential for accurate translation. The protein is Large ribosomal subunit protein bL12 of Prochlorococcus marinus (strain MIT 9313).